We begin with the raw amino-acid sequence, 171 residues long: Large ribosomal subunit protein uL10 (171 aa).

This sequence belongs to the universal ribosomal protein uL10 family. Part of the ribosomal stalk of the 50S ribosomal subunit. The N-terminus interacts with L11 and the large rRNA to form the base of the stalk. The C-terminus forms an elongated spine to which L12 dimers bind in a sequential fashion forming a multimeric L10(L12)X complex.

Functionally, forms part of the ribosomal stalk, playing a central role in the interaction of the ribosome with GTP-bound translation factors. The chain is Large ribosomal subunit protein uL10 from Nitrosomonas europaea (strain ATCC 19718 / CIP 103999 / KCTC 2705 / NBRC 14298).